We begin with the raw amino-acid sequence, 214 residues long: Phosphatidyl-N-methylethanolamine N-methyltransferase (214 aa).

Residues 1-19 (MPLVALGVADLFNFVDYSK) lie on the Lumenal side of the membrane. Residues 20–40 (TSLAISAAAIAFNPTFWNIVA) constitute an intramembrane region (helical). Over 41-52 (RREYRTKFLTRA) the chain is Lumenal. Residues 53 to 74 (FGGNAQVACYFLAVTIFGLGLV) traverse the membrane as a helical segment. The Cytoplasmic portion of the chain corresponds to 75–101 (RDFLYERALRDQPSHPLLEGTYVKYAA). Residues 102-122 (YALLALGNLLVITSTMRLGIT) form a helical membrane-spanning segment. 106–108 (ALG) provides a ligand contact to S-adenosyl-L-methionine. Over 123 to 165 (GTFLGDYFGILMDGIVTGFPFNVTSAPMYYGSTMSFLGTALLY) the chain is Lumenal. A helical transmembrane segment spans residues 166–186 (GKPAGLLLTAWVLFVYIIAIQ). Over 187 to 214 (FENPFTAEIYAKRDRERAKAAGTSKKEL) the chain is Cytoplasmic. 188–189 (EN) contributes to the S-adenosyl-L-methionine binding site.

Belongs to the class VI-like SAM-binding methyltransferase superfamily. PEMT/PEM2 methyltransferase family.

It is found in the endoplasmic reticulum membrane. The protein localises to the mitochondrion membrane. The enzyme catalyses a 1,2-diacyl-sn-glycero-3-phospho-N-methylethanolamine + S-adenosyl-L-methionine = a 1,2-diacyl-sn-glycero-3-phospho-N,N-dimethylethanolamine + S-adenosyl-L-homocysteine + H(+). The catalysed reaction is a 1,2-diacyl-sn-glycero-3-phospho-N,N-dimethylethanolamine + S-adenosyl-L-methionine = a 1,2-diacyl-sn-glycero-3-phosphocholine + S-adenosyl-L-homocysteine + H(+). It functions in the pathway phospholipid metabolism; phosphatidylcholine biosynthesis. Its function is as follows. Catalyzes the second two steps of the methylation pathway of phosphatidylcholine biosynthesis, the SAM-dependent methylation of phosphatidylmonomethylethanolamine (PMME) to phosphatidyldimethylethanolamine (PDME) and of PDME to phosphatidylcholine (PC). The sequence is that of Phosphatidyl-N-methylethanolamine N-methyltransferase from Neurospora crassa (strain ATCC 24698 / 74-OR23-1A / CBS 708.71 / DSM 1257 / FGSC 987).